A 185-amino-acid polypeptide reads, in one-letter code: Peptidyl-tRNA hydrolase (185 aa).

Y14 contributes to the tRNA binding site. The active-site Proton acceptor is the H19. 3 residues coordinate tRNA: F64, N66, and N112.

The protein belongs to the PTH family. As to quaternary structure, monomer.

It is found in the cytoplasm. The enzyme catalyses an N-acyl-L-alpha-aminoacyl-tRNA + H2O = an N-acyl-L-amino acid + a tRNA + H(+). Functionally, hydrolyzes ribosome-free peptidyl-tRNAs (with 1 or more amino acids incorporated), which drop off the ribosome during protein synthesis, or as a result of ribosome stalling. In terms of biological role, catalyzes the release of premature peptidyl moieties from peptidyl-tRNA molecules trapped in stalled 50S ribosomal subunits, and thus maintains levels of free tRNAs and 50S ribosomes. The sequence is that of Peptidyl-tRNA hydrolase from Lacticaseibacillus casei (strain BL23) (Lactobacillus casei).